A 164-amino-acid polypeptide reads, in one-letter code: Large ribosomal subunit protein bL9 (164 aa).

Belongs to the bacterial ribosomal protein bL9 family.

Functionally, binds to the 23S rRNA. The polypeptide is Large ribosomal subunit protein bL9 (Borrelia hermsii (strain HS1 / DAH)).